The primary structure comprises 325 residues: DNA-directed RNA polymerase subunit alpha (325 aa).

The interval 1–231 (MQTSLLKPKI…DQLSVFAALE (231 aa)) is alpha N-terminal domain (alpha-NTD). Residues 246–325 (IDPILLRPVD…ENWPPAGLDK (80 aa)) are alpha C-terminal domain (alpha-CTD).

The protein belongs to the RNA polymerase alpha chain family. Homodimer. The RNAP catalytic core consists of 2 alpha, 1 beta, 1 beta' and 1 omega subunit. When a sigma factor is associated with the core the holoenzyme is formed, which can initiate transcription.

The catalysed reaction is RNA(n) + a ribonucleoside 5'-triphosphate = RNA(n+1) + diphosphate. In terms of biological role, DNA-dependent RNA polymerase catalyzes the transcription of DNA into RNA using the four ribonucleoside triphosphates as substrates. In Burkholderia mallei (strain NCTC 10247), this protein is DNA-directed RNA polymerase subunit alpha.